The chain runs to 383 residues: Arginine biosynthesis bifunctional protein ArgJ (383 aa).

Substrate is bound by residues Thr146, Lys168, Thr179, Glu259, Asn378, and Thr383. The active-site Nucleophile is Thr179.

The protein belongs to the ArgJ family. As to quaternary structure, heterotetramer of two alpha and two beta chains.

Its subcellular location is the cytoplasm. It carries out the reaction N(2)-acetyl-L-ornithine + L-glutamate = N-acetyl-L-glutamate + L-ornithine. The catalysed reaction is L-glutamate + acetyl-CoA = N-acetyl-L-glutamate + CoA + H(+). The protein operates within amino-acid biosynthesis; L-arginine biosynthesis; L-ornithine and N-acetyl-L-glutamate from L-glutamate and N(2)-acetyl-L-ornithine (cyclic): step 1/1. It participates in amino-acid biosynthesis; L-arginine biosynthesis; N(2)-acetyl-L-ornithine from L-glutamate: step 1/4. Functionally, catalyzes two activities which are involved in the cyclic version of arginine biosynthesis: the synthesis of N-acetylglutamate from glutamate and acetyl-CoA as the acetyl donor, and of ornithine by transacetylation between N(2)-acetylornithine and glutamate. The chain is Arginine biosynthesis bifunctional protein ArgJ from Thermobifida fusca (strain YX).